A 207-amino-acid polypeptide reads, in one-letter code: Thymidylate kinase (207 aa).

7-14 (GCEGTGKT) serves as a coordination point for ATP.

Belongs to the thymidylate kinase family.

It carries out the reaction dTMP + ATP = dTDP + ADP. Phosphorylation of dTMP to form dTDP in both de novo and salvage pathways of dTTP synthesis. This chain is Thymidylate kinase, found in Onion yellows phytoplasma (strain OY-M).